Consider the following 637-residue polypeptide: Threonine--tRNA ligase (637 aa).

Residues Met1–Thr61 enclose the TGS domain. Residues Asp244–Pro535 form a catalytic region. Zn(2+)-binding residues include Cys335, His386, and His512.

This sequence belongs to the class-II aminoacyl-tRNA synthetase family. Homodimer. Zn(2+) is required as a cofactor.

It localises to the cytoplasm. It carries out the reaction tRNA(Thr) + L-threonine + ATP = L-threonyl-tRNA(Thr) + AMP + diphosphate + H(+). Functionally, catalyzes the attachment of threonine to tRNA(Thr) in a two-step reaction: L-threonine is first activated by ATP to form Thr-AMP and then transferred to the acceptor end of tRNA(Thr). Also edits incorrectly charged L-seryl-tRNA(Thr). The sequence is that of Threonine--tRNA ligase from Thiobacillus denitrificans (strain ATCC 25259 / T1).